An 815-amino-acid chain; its full sequence is Lon protease 1 (815 aa).

Residues 14–211 form the Lon N-terminal domain; the sequence is IAILPLLGTV…KLNEVLTREL (198 aa). 370–377 contributes to the ATP binding site; sequence GPPGVGKT. In terms of domain architecture, Lon proteolytic spans 606–787; it reads TDRPGIVTGL…GQVIELALRA (182 aa). Residues Ser693 and Lys736 contribute to the active site.

The protein belongs to the peptidase S16 family. In terms of assembly, homohexamer. Organized in a ring with a central cavity.

It is found in the cytoplasm. The enzyme catalyses Hydrolysis of proteins in presence of ATP.. ATP-dependent serine protease that mediates the selective degradation of mutant and abnormal proteins as well as certain short-lived regulatory proteins. Required for cellular homeostasis and for survival from DNA damage and developmental changes induced by stress. Degrades polypeptides processively to yield small peptide fragments that are 5 to 10 amino acids long. Binds to DNA in a double-stranded, site-specific manner. This chain is Lon protease 1, found in Herpetosiphon aurantiacus (strain ATCC 23779 / DSM 785 / 114-95).